The following is a 633-amino-acid chain: Chaperone protein dnaK2 (633 aa).

At threonine 196 the chain carries Phosphothreonine; by autocatalysis. The interval alanine 600–glycine 633 is disordered. The segment covering aspartate 624–glycine 633 has biased composition (acidic residues).

Belongs to the heat shock protein 70 family.

In terms of biological role, acts as a chaperone. The chain is Chaperone protein dnaK2 (dnaK2) from Streptomyces avermitilis (strain ATCC 31267 / DSM 46492 / JCM 5070 / NBRC 14893 / NCIMB 12804 / NRRL 8165 / MA-4680).